Here is a 311-residue protein sequence, read N- to C-terminus: Exosome complex component Rrp4 (311 aa).

The S1 motif domain maps to 63 to 131 (GDVVIGEITD…EVKKVKLGLK (69 aa)). The 59-residue stretch at 139–197 (RDGILVYITPTKVPRLIGKRGSMINMVKEKTHCDIVVGQNGVVWIKGEPDMERIAEKVV) folds into the KH domain. Residues 222–311 (GVEPEIQVEE…EVKDENNSER (90 aa)) form a disordered region. The span at 241 to 300 (PESEDFEEASDYSEDVEVSPESEDIEEVSDESEDLEVESEDVEEGTDTPAAEEDDGEAGD) shows a compositional bias: acidic residues. Residues 301–311 (AEVKDENNSER) are compositionally biased toward basic and acidic residues.

Belongs to the RRP4 family. As to quaternary structure, component of the archaeal exosome complex. Forms a trimer of Rrp4 and/or Csl4 subunits. The trimer associates with a hexameric ring-like arrangement composed of 3 Rrp41-Rrp42 heterodimers.

It localises to the cytoplasm. In terms of biological role, non-catalytic component of the exosome, which is a complex involved in RNA degradation. Increases the RNA binding and the efficiency of RNA degradation. Confers strong poly(A) specificity to the exosome. This chain is Exosome complex component Rrp4, found in Methanothermobacter thermautotrophicus (strain ATCC 29096 / DSM 1053 / JCM 10044 / NBRC 100330 / Delta H) (Methanobacterium thermoautotrophicum).